A 218-amino-acid chain; its full sequence is MKAFDRPALTAILVEGARGLSLTLSEAQITKLIDYLALMVKWNSVYNLTAVRDPLQMVTQHLLDSLAAVSAFAGAKNVLDVGAGGGLPGIVLAIWAAEAEPEMRVSLIDTVHKKTAFLTQVKAELGLANVSVHTARVEQWNAPHKFDVITSRAFAELNDFVNWSGHLLDEGGEFIALKGVAPDTEVAHLPAGWKVREVRPLQVPTLQAERHLIFIERG.

S-adenosyl-L-methionine contacts are provided by residues glycine 82, leucine 87, 137 to 138 (VE), and arginine 152.

This sequence belongs to the methyltransferase superfamily. RNA methyltransferase RsmG family.

Its subcellular location is the cytoplasm. The enzyme catalyses guanosine(527) in 16S rRNA + S-adenosyl-L-methionine = N(7)-methylguanosine(527) in 16S rRNA + S-adenosyl-L-homocysteine. In terms of biological role, specifically methylates the N7 position of guanine in position 527 of 16S rRNA. In Herminiimonas arsenicoxydans, this protein is Ribosomal RNA small subunit methyltransferase G.